A 189-amino-acid polypeptide reads, in one-letter code: ATP-dependent protease subunit HslV (189 aa).

T12 is a catalytic residue. 3 residues coordinate Na(+): S172, C175, and T178.

The protein belongs to the peptidase T1B family. HslV subfamily. As to quaternary structure, a double ring-shaped homohexamer of HslV is capped on each side by a ring-shaped HslU homohexamer. The assembly of the HslU/HslV complex is dependent on binding of ATP.

The protein localises to the cytoplasm. It catalyses the reaction ATP-dependent cleavage of peptide bonds with broad specificity.. Its activity is regulated as follows. Allosterically activated by HslU binding. Functionally, protease subunit of a proteasome-like degradation complex believed to be a general protein degrading machinery. This chain is ATP-dependent protease subunit HslV, found in Ehrlichia chaffeensis (strain ATCC CRL-10679 / Arkansas).